The primary structure comprises 648 residues: Threonine--tRNA ligase (648 aa).

The TGS domain occupies 1 to 61 (MINITFPDGA…TEDGSIEIVT (61 aa)). The catalytic stretch occupies residues 242 to 540 (DHRKLGKELD…LIENYKGAFP (299 aa)). Cys336, His387, and His517 together coordinate Zn(2+).

It belongs to the class-II aminoacyl-tRNA synthetase family. As to quaternary structure, homodimer. The cofactor is Zn(2+).

It is found in the cytoplasm. The catalysed reaction is tRNA(Thr) + L-threonine + ATP = L-threonyl-tRNA(Thr) + AMP + diphosphate + H(+). In terms of biological role, catalyzes the attachment of threonine to tRNA(Thr) in a two-step reaction: L-threonine is first activated by ATP to form Thr-AMP and then transferred to the acceptor end of tRNA(Thr). Also edits incorrectly charged L-seryl-tRNA(Thr). The polypeptide is Threonine--tRNA ligase (Streptococcus thermophilus (strain ATCC BAA-250 / LMG 18311)).